The sequence spans 387 residues: Probable serine/threonine-protein kinase PBL18 (387 aa).

Positions 1 to 37 are disordered; the sequence is MGNCLDSSARVGNRESTFGGSSRISRKPNQSSRLSSL. A lipid anchor (N-myristoyl glycine) is attached at Gly-2. A lipid anchor (S-palmitoyl cysteine) is attached at Cys-4. Residues 14–37 show a composition bias toward polar residues; the sequence is RESTFGGSSRISRKPNQSSRLSSL. Thr-73 carries the post-translational modification Phosphothreonine. The 282-residue stretch at 84–365 folds into the Protein kinase domain; that stretch reads FKPNSMIGEG…ADVLSTLQQL (282 aa). Residues 90–98 and Lys-122 contribute to the ATP site; that span reads IGEGGFGCV. Residue Tyr-167 is modified to Phosphotyrosine. Asp-215 serves as the catalytic Proton acceptor. Ser-219 carries the phosphoserine modification. Phosphothreonine occurs at positions 250 and 255. The residue at position 263 (Tyr-263) is a Phosphotyrosine. Residues 368-387 are disordered; it reads SSKKMGSTQNIVMSPSSHMS.

This sequence belongs to the protein kinase superfamily. Ser/Thr protein kinase family.

Its subcellular location is the cell membrane. The catalysed reaction is L-seryl-[protein] + ATP = O-phospho-L-seryl-[protein] + ADP + H(+). It carries out the reaction L-threonyl-[protein] + ATP = O-phospho-L-threonyl-[protein] + ADP + H(+). In terms of biological role, may be involved in plant defense signaling. The polypeptide is Probable serine/threonine-protein kinase PBL18 (Arabidopsis thaliana (Mouse-ear cress)).